Reading from the N-terminus, the 192-residue chain is Glycerol-3-phosphate acyltransferase (192 aa).

A run of 5 helical transmembrane segments spans residues 3–23 (ALFLVIFAYLLGSITFGEVIA), 51–71 (YGVLVFFLDFLKGFIPALIAV), 80–100 (VLTFTGLASVLGHMYPVFFGF), 112–132 (VVFAVSPSVALFSFLVWLGIF), and 149–169 (AFLFLFVAGYPVNVLFMAIVI).

It belongs to the PlsY family. Probably interacts with PlsX.

The protein resides in the cell inner membrane. It carries out the reaction an acyl phosphate + sn-glycerol 3-phosphate = a 1-acyl-sn-glycero-3-phosphate + phosphate. The protein operates within lipid metabolism; phospholipid metabolism. Functionally, catalyzes the transfer of an acyl group from acyl-phosphate (acyl-PO(4)) to glycerol-3-phosphate (G3P) to form lysophosphatidic acid (LPA). This enzyme utilizes acyl-phosphate as fatty acyl donor, but not acyl-CoA or acyl-ACP. This chain is Glycerol-3-phosphate acyltransferase, found in Aquifex aeolicus (strain VF5).